The sequence spans 500 residues: Glutamate decarboxylase 3 (500 aa).

At Ser-8 the chain carries Phosphoserine. Lys-277 carries the post-translational modification N6-(pyridoxal phosphate)lysine.

This sequence belongs to the group II decarboxylase family. In terms of assembly, homohexamer. Interacts with calmodulin. Requires pyridoxal 5'-phosphate as cofactor. In terms of tissue distribution, expressed at low levels in siliques.

The catalysed reaction is L-glutamate + H(+) = 4-aminobutanoate + CO2. Its function is as follows. Catalyzes the production of GABA. The calmodulin-binding is calcium-dependent and it is proposed that this may, directly or indirectly, form a calcium regulated control of GABA biosynthesis. This chain is Glutamate decarboxylase 3 (GAD3), found in Arabidopsis thaliana (Mouse-ear cress).